A 106-amino-acid polypeptide reads, in one-letter code: Stress-responsive protein 1 (106 aa).

It localises to the mitochondrion. Stress-responsive protein that may play a role in regulation of cell cycle. This Schizosaccharomyces pombe (strain 972 / ATCC 24843) (Fission yeast) protein is Stress-responsive protein 1 (sro1).